The following is a 129-amino-acid chain: Small ribosomal subunit protein uS11 (129 aa).

The protein belongs to the universal ribosomal protein uS11 family. In terms of assembly, part of the 30S ribosomal subunit. Interacts with proteins S7 and S18. Binds to IF-3.

Its function is as follows. Located on the platform of the 30S subunit, it bridges several disparate RNA helices of the 16S rRNA. Forms part of the Shine-Dalgarno cleft in the 70S ribosome. In Caulobacter sp. (strain K31), this protein is Small ribosomal subunit protein uS11.